The chain runs to 308 residues: Putative cathepsin L 3 (308 aa).

An N-terminal signal peptide occupies residues 1 to 21 (MKQFLTAAIVTLLMTAGYYHL). Positions 22 to 110 (QEDDTNDFER…GASLPEVQLE (89 aa)) are cleaved as a propeptide — activation peptide. Cystine bridges form between Cys129-Cys170 and Cys254-Cys298. Catalysis depends on residues His261 and Asn278.

It belongs to the peptidase C1 family.

The protein resides in the secreted. The enzyme catalyses Specificity close to that of papain. As compared to cathepsin B, cathepsin L exhibits higher activity toward protein substrates, but has little activity on Z-Arg-Arg-NHMec, and no peptidyl-dipeptidase activity.. May be involved in extracellular digestion. The sequence is that of Putative cathepsin L 3 from Paramecium tetraurelia.